Reading from the N-terminus, the 381-residue chain is MADYYETLGVERGASDDEIKKAYRKLSRKYHPDIAGPEFEDKFKEVNNAYDVLSNPDKRRMYDSGVDPNNPNAGAGGFSGAGFGDMSDVFSTFFGSAFGGGSQGPVPRTQPGRDALASASIDLKTAVFGGTAHVKINTFSLCQECGGSGAQGGAQPVTCPDCHGQGFMQKVVRTMLGQMMTSAPCERCEGHGTIIQNPCPSCMGHGRVRTTRTVGVTVPAGINDNARLRLANQGEVGEGGGAAGDLYIDIRIKADKQFTRDGDDLHCWIQVPMSWAVLGHDLSIDTFDGEKTVSIPAGCQTEDTVTLKGLGVTNIRNKDERGNLIAHVNVLIPTKLNETERGLIEQFAASHDSGATHVSQASRPQAGQKKGFFSKLKDALS.

Residues 3–66 enclose the J domain; the sequence is DYYETLGVER…DKRRMYDSGV (64 aa). The CR-type zinc-finger motif lies at 129–211; that stretch reads GGTAHVKINT…CMGHGRVRTT (83 aa). Zn(2+)-binding residues include C142, C145, C159, C162, C185, C188, C199, and C202. CXXCXGXG motif repeat units follow at residues 142-149, 159-166, 185-192, and 199-206; these read CQECGGSG, CPDCHGQG, CERCEGHG, and CPSCMGHG. Residues 355–381 are disordered; sequence ATHVSQASRPQAGQKKGFFSKLKDALS. Positions 356–365 are enriched in polar residues; it reads THVSQASRPQ.

It belongs to the DnaJ family. In terms of assembly, homodimer. It depends on Zn(2+) as a cofactor.

Its subcellular location is the cytoplasm. Participates actively in the response to hyperosmotic and heat shock by preventing the aggregation of stress-denatured proteins and by disaggregating proteins, also in an autonomous, DnaK-independent fashion. Unfolded proteins bind initially to DnaJ; upon interaction with the DnaJ-bound protein, DnaK hydrolyzes its bound ATP, resulting in the formation of a stable complex. GrpE releases ADP from DnaK; ATP binding to DnaK triggers the release of the substrate protein, thus completing the reaction cycle. Several rounds of ATP-dependent interactions between DnaJ, DnaK and GrpE are required for fully efficient folding. Also involved, together with DnaK and GrpE, in the DNA replication of plasmids through activation of initiation proteins. This chain is Chaperone protein DnaJ, found in Bifidobacterium longum (strain NCC 2705).